The primary structure comprises 83 residues: Evasin P1124 (83 aa).

The signal sequence occupies residues 1–28 (MAVNVFTILQLAVFAAIVLNVNLHSVSA). 3 cysteine pairs are disulfide-bonded: Cys-48–Cys-66, Cys-52–Cys-68, and Cys-62–Cys-79. N-linked (GlcNAc...) asparagine glycosylation is present at Asn-51.

The protein localises to the secreted. Salivary chemokine-binding protein which binds to host chemokines CXCL1, CXCL2, CXCL3, CXCL5, CXCL6, CXCL12 and CXCL13. The protein is Evasin P1124 of Ixodes ricinus (Common tick).